A 1652-amino-acid polypeptide reads, in one-letter code: MEGMALYLVAALLIGFPASSFGALYTFITPGVLRTDTEEKILVEAHGDNAPKQLDISVHDFPRKQKILYQTRVDMNPAGGMLVTPTITIPAKDLNKDSRQNQYVVVQVTAPGLRLEKVVLLSYQSGFVFIQTDKGIYTPGSPVRYRVFSMDHNMHRMDKTVIVEFQTPQGIVVSSNPVNPASSLIRPYNLPELVSFGTWKAVAKYENSPEESYTALFDVREYVLPGFEVRVQPSEKFLYIDGNTDFHVSITARYLYGKRVEGVAFVLFGVKIDGNKKSIPESLTRIPIIDGDGEATLERHTLSRRFQRLNDLVGHNLYVSVTVITDSGSDMVVTEQSGIHIVTSPYQISFTKTPKYFKPGMPYELMVYVTNPDGSPAANVPVVSESIHSKGTTLSDGTAKLILNTPLNIQSLSITVKTNHRDLPRERQAMKSMTATAYQTQGGSGNYLHIAITSTEIKPGDNLPVSFNVRGNANSLNQIQYFTYLILTKGKIFKVGRQPRGAGQNLVTMTLPITPDLIPSFRFLAYYQVGNSEIVADSVWVDVKDTCMGTLVVKGASSRDNRIQKPGAAMKIKLEGDPGARVGLVAVDKAVYVLSDEYKISQTKIWDTIEKSDFGCTAGSGQNNLGVFEDAGLALATSTSLNTKQRSDAKCPQPENRRRRRSVVLLDSKASKAAQFPDQALRKCCEDGMHENPMGYSCEKREKYIQEGDACKAAFLECCRYIKGIHDENKREDELFLARSDFEDEFFGEDNIISRSDFPESWLWLTENLNAVPNNEGISSKTVPFYLRDSITTWEVLAVSITPTKGICVAEPYEITVMKDFFIDLRLPYSVVKNEQVEVRAILYNYVDDDIDVRVELLHNPAFCSVATETQRYRTQVTIKALSSWAVPFVIVPLQQGLHDIEVRASVRGQLASDGVKKKLKVVPEGMRKDIVTVIELDPSTKGVGGTQEQLVKANELDGKVPDTEIETKISVQGDRVAQIVENSIDGNKLSHLIITPSGCGEQNMITMTPSVIATYYLDTTGQWETLGVDRRTEAVQQIKKGYAQQLVYKKADHSYAAFVNRDSSSWLTAYVVKVFAMATKVVPDISHEIICGGVKWLILNRQQPDGVFKENAPVIHGEMLGGTKGAEPEVSLTAFILIALLESRSICNEHINILESSINKAADYLLKKYEKLQRPYTTALTAYALAAAGLLNDDRVLMAASTERNRWEEHNAYTYNIEGTSYALLALLKMEKFAEANPVVRWLTDQKYYGGTYGQTQATVVGFQGLAEYEIAMPSHKDLNLDIVIKLPEREVPISYRIDATNALRAQTTETKLNEDFTVSASGDGKATMTILTVYNAQLREDANVCNQFHLEVSVERIDSNLKQAKGAKETLKLKICTRYLGEVDSTMTIIDVSMLTGFLPDAEDLTRLSKGVDRYISKFEIDNNMAQKGAVIIYLDKVSHSEDECLQFRIQKHFEVGFIQPGSVKVYSYYNLDEQCTRFYHPDKGTGLLNKICHGNVCRCAEETCSLLNQQKKIDLQLRIQKACEPNVDYVYKAKLLRIEEKDASDIYVMDVLEVIKGGTDRNPQAKPRQYVSQRKCQEALNLKVNNDYLIWGLSSDLWHKKDEISYLITRNTWIERWPNEDECQDEEFQNLCNDFTQLSNTLTIFGCPN.

Positions methionine 1–glycine 22 are cleaved as a signal peptide. The Mg(2+) site is built by proline 519, aspartate 542, valine 543, and aspartate 545. 12 disulfide bridges follow: cysteine 547–cysteine 808, cysteine 616–cysteine 651, cysteine 684–cysteine 711, cysteine 685–cysteine 718, cysteine 698–cysteine 719, cysteine 864–cysteine 1502, cysteine 1347–cysteine 1478, cysteine 1378–cysteine 1447, cysteine 1495–cysteine 1500, cysteine 1507–cysteine 1579, cysteine 1526–cysteine 1650, and cysteine 1626–cysteine 1635. Positions arginine 657–serine 740 are excised as a propeptide. Positions arginine 661–arginine 739 are C3a-like domain. Positions cysteine 684–cysteine 719 constitute an Anaphylatoxin-like domain. The interval glutamate 743–serine 754 is factor B binding site. A propeptide spanning residues histidine 992 to tyrosine 1270 is cleaved from the precursor. The C3d-like domain stretch occupies residues histidine 992–tyrosine 1270. Residues cysteine 1000–glutamine 1003 constitute a cross-link (isoglutamyl cysteine thioester (Cys-Gln)). The factor H binding site stretch occupies residues valine 1197–threonine 1260. The NTR domain maps to cysteine 1507–cysteine 1650.

Belongs to the venom complement C3 homolog family. Heterotrimer of alpha, beta and gamma chains; disulfide-linked. Is active with factor B in the presence of factor D. In terms of processing, first processed by the removal of 4 Arg residues by furin-type protease, forming two chains, alpha and gamma/beta precursor, linked by a disulfide bond. Probably, a cobrin-like protease cleaves the C3a-like domain and then the C3d-like domain, generating the mature venom factor (VF). In terms of tissue distribution, expressed by the venom gland.

It is found in the secreted. Functionally, complement-activating protein in venom. It is a structural and functional analog of complement component C3b, the activated form of C3. It binds factor B (CFB), which is subsequently cleaved by factor D (CFD) to form the bimolecular complex VF/Bb. VF/Bb is a C3/C5 convertase that cleaves both complement components C3 and C5. Structurally, it resembles the C3b degradation product C3c, which is not able to form a C3/C5 convertase. Unlike C3b/Bb, VF/Bb is a stable complex and completely resistant to the actions of complement regulatory factors H (CFH) and I (CFI). Therefore, VF continuously activates complement resulting in the depletion of complement activity. This chain is Venom factor, found in Crotalus adamanteus (Eastern diamondback rattlesnake).